Reading from the N-terminus, the 179-residue chain is Cytochrome c-type biogenesis protein CcmE (179 aa).

At 1–8 (MTPRRKSR) the chain is on the cytoplasmic side. Residues 9 to 29 (MTVILFVLLGISIASALVLYA) traverse the membrane as a helical; Signal-anchor for type II membrane protein segment. Residues 30 to 179 (LRQNIDLFYT…QKTSMQEGQK (150 aa)) are Periplasmic-facing. Residues H131 and Y135 each contribute to the heme site. The disordered stretch occupies residues 151–179 (MGVADLKGESERDRQEKAYQKTSMQEGQK). Over residues 156–169 (LKGESERDRQEKAY) the composition is skewed to basic and acidic residues. A compositionally biased stretch (polar residues) spans 170-179 (QKTSMQEGQK).

This sequence belongs to the CcmE/CycJ family.

The protein localises to the cell inner membrane. In terms of biological role, heme chaperone required for the biogenesis of c-type cytochromes. Transiently binds heme delivered by CcmC and transfers the heme to apo-cytochromes in a process facilitated by CcmF and CcmH. The polypeptide is Cytochrome c-type biogenesis protein CcmE (Pasteurella multocida (strain Pm70)).